The sequence spans 406 residues: Flavohemoprotein (406 aa).

The Globin domain occupies Val6–Lys144. His91 contacts heme b. Residues Tyr101 and Glu143 each act as charge relay system in the active site. Residues Gly155–Lys406 are reductase. The region spanning Thr158 to Asp267 is the FAD-binding FR-type domain. Residues Tyr196 and Arg212–Ser215 each bind FAD. Gly280–Pro285 serves as a coordination point for NADP(+). An FAD-binding site is contributed by Leu397 to Pro400.

Belongs to the globin family. Two-domain flavohemoproteins subfamily. It in the C-terminal section; belongs to the flavoprotein pyridine nucleotide cytochrome reductase family. The cofactor is heme b. FAD serves as cofactor.

It carries out the reaction 2 nitric oxide + NADPH + 2 O2 = 2 nitrate + NADP(+) + H(+). It catalyses the reaction 2 nitric oxide + NADH + 2 O2 = 2 nitrate + NAD(+) + H(+). Functionally, is involved in NO detoxification in an aerobic process, termed nitric oxide dioxygenase (NOD) reaction that utilizes O(2) and NAD(P)H to convert NO to nitrate, which protects the bacterium from various noxious nitrogen compounds. Therefore, plays a central role in the inducible response to nitrosative stress. The chain is Flavohemoprotein from Oceanobacillus iheyensis (strain DSM 14371 / CIP 107618 / JCM 11309 / KCTC 3954 / HTE831).